An 818-amino-acid chain; its full sequence is Structure-specific endonuclease subunit SLX4 (818 aa).

5 disordered regions span residues 1-39 (MSFL…PSAS), 53-151 (RDPY…SSSN), 279-324 (FSEG…HQDS), 413-437 (NAQF…KTSK), and 587-712 (MLPA…MASE). Residues 28-39 (VIDSSPSVPSAS) are compositionally biased toward low complexity. Residues 90–103 (PSERTKDAHGKDRF) show a composition bias toward basic and acidic residues. The segment covering 306 to 316 (TTSTTITSLST) has biased composition (low complexity). Polar residues predominate over residues 426 to 437 (TRSPCSNPKTSK). Residues 604-618 (QMSKRDTIKSRDIRA) are compositionally biased toward basic and acidic residues. Polar residues-rich tracts occupy residues 621–640 (SRSN…QNTG), 652–672 (SSKS…TQSV), and 696–712 (SLAS…MASE).

This sequence belongs to the SLX4 family. As to quaternary structure, forms a heterodimer with SLX1. Phosphorylated in response to DNA damage.

The protein resides in the nucleus. Regulatory subunit of the SLX1-SLX4 structure-specific endonuclease that resolves DNA secondary structures generated during DNA repair and recombination. Has endonuclease activity towards branched DNA substrates, introducing single-strand cuts in duplex DNA close to junctions with ss-DNA. The sequence is that of Structure-specific endonuclease subunit SLX4 from Uncinocarpus reesii (strain UAMH 1704).